A 468-amino-acid polypeptide reads, in one-letter code: 3-isopropylmalate dehydratase large subunit (468 aa).

[4Fe-4S] cluster contacts are provided by cysteine 347, cysteine 407, and cysteine 410.

This sequence belongs to the aconitase/IPM isomerase family. LeuC type 1 subfamily. Heterodimer of LeuC and LeuD. It depends on [4Fe-4S] cluster as a cofactor.

The catalysed reaction is (2R,3S)-3-isopropylmalate = (2S)-2-isopropylmalate. The protein operates within amino-acid biosynthesis; L-leucine biosynthesis; L-leucine from 3-methyl-2-oxobutanoate: step 2/4. In terms of biological role, catalyzes the isomerization between 2-isopropylmalate and 3-isopropylmalate, via the formation of 2-isopropylmaleate. This Prochlorococcus marinus (strain SARG / CCMP1375 / SS120) protein is 3-isopropylmalate dehydratase large subunit.